We begin with the raw amino-acid sequence, 154 residues long: 20 kDa calcium-binding protein (154 aa).

EF-hand domains lie at 13-48, 49-84, 86-121, and 122-154; these read DQVK…LNLT, VKPD…KLQE, QDER…LGDD, and LTEE…MTSE. 11 residues coordinate Ca(2+): Asp-62, Asp-64, Thr-66, Asp-99, Asn-101, Glu-105, Asp-110, Asp-135, Asp-137, Ser-139, and Glu-146.

It is found in the tegument membrane. Functionally, calcium-binding protein. The protein is 20 kDa calcium-binding protein (SM20) of Schistosoma mansoni (Blood fluke).